Reading from the N-terminus, the 115-residue chain is Non-specific lipid-transfer protein (115 aa).

The N-terminal stretch at 1–24 (MASSAVIKLALVVALCMAVSVAHA) is a signal peptide. 4 disulfide bridges follow: C27–C74, C37–C51, C52–C97, and C72–C111.

Belongs to the plant LTP family.

Plant non-specific lipid-transfer proteins transfer phospholipids as well as galactolipids across membranes. May play a role in wax or cutin deposition in the cell walls of expanding epidermal cells and certain secretory tissues. The protein is Non-specific lipid-transfer protein of Pyrus communis (Pear).